Here is a 97-residue protein sequence, read N- to C-terminus: Unclassified hydrophobin F (97 aa).

Positions 1–17 (MRVSALAFAAVLSLVSA) are cleaved as a signal peptide. 4 disulfide bridges follow: C24–C75, C39–C67, C40–C58, and C76–C85.

It localises to the secreted. It is found in the cell wall. In terms of biological role, aerial growth, conidiation, and dispersal of filamentous fungi in the environment rely upon a capability of their secreting small amphipathic proteins called hydrophobins (HPBs) with low sequence identity. Class I can self-assemble into an outermost layer of rodlet bundles on aerial cell surfaces, conferring cellular hydrophobicity that supports fungal growth, development and dispersal; whereas Class II form highly ordered films at water-air interfaces through intermolecular interactions but contribute nothing to the rodlet structure. In P.expansum, hydrophobins contribute to germination, tolerance to cold stress and mycotoxins patulin and citrinin production. HfbC, HfbD, HfbE, and HfbF have functional redundancy in fungal surface hydrophobicity. The polypeptide is Unclassified hydrophobin F (Penicillium expansum (Blue mold rot fungus)).